The chain runs to 276 residues: NAD kinase (276 aa).

Asp61 functions as the Proton acceptor in the catalytic mechanism. Residues 61–62, Arg66, 135–136, Arg146, His163, Asp165, and Ala200 each bind NAD(+); these read DG and NE.

This sequence belongs to the NAD kinase family. Requires a divalent metal cation as cofactor.

The protein localises to the cytoplasm. It catalyses the reaction NAD(+) + ATP = ADP + NADP(+) + H(+). In terms of biological role, involved in the regulation of the intracellular balance of NAD and NADP, and is a key enzyme in the biosynthesis of NADP. Catalyzes specifically the phosphorylation on 2'-hydroxyl of the adenosine moiety of NAD to yield NADP. The polypeptide is NAD kinase (Chloroflexus aurantiacus (strain ATCC 29366 / DSM 635 / J-10-fl)).